Here is a 241-residue protein sequence, read N- to C-terminus: Class B acid phosphatase (241 aa).

The first 27 residues, Met-1–Ala-27, serve as a signal peptide directing secretion. Asp-72 acts as the Nucleophile in catalysis. Residues Asp-72 and Asp-74 each coordinate Mg(2+). The active-site Proton donor is the Asp-74. Residues Thr-141 to Gly-142 and Lys-181 contribute to the substrate site. A Mg(2+)-binding site is contributed by Asp-196.

Belongs to the class B bacterial acid phosphatase family. As to quaternary structure, homotetramer. Mg(2+) serves as cofactor.

The protein resides in the periplasm. The enzyme catalyses a phosphate monoester + H2O = an alcohol + phosphate. Functionally, dephosphorylates several organic phosphate monoesters. Also has a phosphotransferase activity catalyzing the transfer of low-energy phosphate groups from organic phosphate monoesters to free hydroxyl groups of various organic compounds. This chain is Class B acid phosphatase, found in Edwardsiella ictaluri (strain 93-146).